The following is a 287-amino-acid chain: Phosphatidylserine decarboxylase proenzyme (287 aa).

Catalysis depends on charge relay system; for autoendoproteolytic cleavage activity residues Asp89, His146, and Ser252. Catalysis depends on Ser252, which acts as the Schiff-base intermediate with substrate; via pyruvic acid; for decarboxylase activity. Ser252 bears the Pyruvic acid (Ser); by autocatalysis mark.

This sequence belongs to the phosphatidylserine decarboxylase family. PSD-B subfamily. Prokaryotic type I sub-subfamily. Heterodimer of a large membrane-associated beta subunit and a small pyruvoyl-containing alpha subunit. Requires pyruvate as cofactor. Is synthesized initially as an inactive proenzyme. Formation of the active enzyme involves a self-maturation process in which the active site pyruvoyl group is generated from an internal serine residue via an autocatalytic post-translational modification. Two non-identical subunits are generated from the proenzyme in this reaction, and the pyruvate is formed at the N-terminus of the alpha chain, which is derived from the carboxyl end of the proenzyme. The autoendoproteolytic cleavage occurs by a canonical serine protease mechanism, in which the side chain hydroxyl group of the serine supplies its oxygen atom to form the C-terminus of the beta chain, while the remainder of the serine residue undergoes an oxidative deamination to produce ammonia and the pyruvoyl prosthetic group on the alpha chain. During this reaction, the Ser that is part of the protease active site of the proenzyme becomes the pyruvoyl prosthetic group, which constitutes an essential element of the active site of the mature decarboxylase.

It is found in the cell membrane. The enzyme catalyses a 1,2-diacyl-sn-glycero-3-phospho-L-serine + H(+) = a 1,2-diacyl-sn-glycero-3-phosphoethanolamine + CO2. It functions in the pathway phospholipid metabolism; phosphatidylethanolamine biosynthesis; phosphatidylethanolamine from CDP-diacylglycerol: step 2/2. In terms of biological role, catalyzes the formation of phosphatidylethanolamine (PtdEtn) from phosphatidylserine (PtdSer). The protein is Phosphatidylserine decarboxylase proenzyme of Shewanella sediminis (strain HAW-EB3).